The chain runs to 78 residues: MDCCTESACSKPDDDILDIPLDDPGANAAAAKIQASFRGHMARKKIKSGERGRKGPGPGGPGGAGGARGGAGGGPSGD.

Met-1 is subject to N-acetylmethionine. The IQ domain maps to 26-49; the sequence is ANAAAAKIQASFRGHMARKKIKSG. At Ser-36 the chain carries Phosphoserine; by PHK and PKC. Residues 38-78 are disordered; the sequence is RGHMARKKIKSGERGRKGPGPGGPGGAGGARGGAGGGPSGD. Residues 50–78 enclose the Collagen-like domain; that stretch reads ERGRKGPGPGGPGGAGGARGGAGGGPSGD. A compositionally biased stretch (gly residues) spans 55–78; it reads GPGPGGPGGAGGARGGAGGGPSGD. Citrulline; partial is present on Arg-68. Omega-N-methylarginine is present on Arg-68.

Belongs to the neurogranin family. Post-translationally, the N-terminus is blocked. Phosphorylated at Ser-36 by PHK and PKC. Phosphorylation prevents interaction with Calmodulin and interrupts several learning- and memory-associated functions. As to expression, is highly enriched in brain. Accumulates postsynaptically in dendritic spines of neostriatal neurons.

Functionally, acts as a 'third messenger' substrate of protein kinase C-mediated molecular cascades during synaptic development and remodeling. Binds to calmodulin in the absence of calcium. This Bos taurus (Bovine) protein is Neurogranin (NRGN).